Here is an 872-residue protein sequence, read N- to C-terminus: Probable LRR receptor-like serine/threonine-protein kinase At1g51880 (872 aa).

The N-terminal stretch at 1-23 is a signal peptide; the sequence is MKSIHGFLLFLITAYVILESVQA. Residues 24–513 are Extracellular-facing; it reads QDQLGFISLD…GKSKKVPMIP (490 aa). Residues N40, N49, N96, N181, N255, N268, N294, N339, and N401 are each glycosylated (N-linked (GlcNAc...) asparagine). LRR repeat units follow at residues 411–434, 435–457, and 459–482; these read RIIS…SKLT, QLIE…FADM, and LLKL…IQQR. N-linked (GlcNAc...) asparagine glycosylation is found at N464 and N472. The chain crosses the membrane as a helical span at residues 514–534; the sequence is IVASVAGVFALLVILAIFFVV. Over 535 to 872 the chain is Cytoplasmic; the sequence is RRKNGESNKG…SASEFSPGAR (338 aa). At T557 the chain carries Phosphothreonine. In terms of domain architecture, Protein kinase spans 566 to 838; that stretch reads NNFERVLGKG…HVVTELNECV (273 aa). Residues 572-580 and K593 each bind ATP; that span reads LGKGGFGTV. Residue Y638 is modified to Phosphotyrosine. D690 (proton acceptor) is an active-site residue. S724 is subject to Phosphoserine. A phosphothreonine mark is found at T725 and T730. Y738 is modified (phosphotyrosine).

This sequence belongs to the protein kinase superfamily. Ser/Thr protein kinase family.

Its subcellular location is the membrane. The catalysed reaction is L-seryl-[protein] + ATP = O-phospho-L-seryl-[protein] + ADP + H(+). The enzyme catalyses L-threonyl-[protein] + ATP = O-phospho-L-threonyl-[protein] + ADP + H(+). The chain is Probable LRR receptor-like serine/threonine-protein kinase At1g51880 from Arabidopsis thaliana (Mouse-ear cress).